Reading from the N-terminus, the 455-residue chain is Bifunctional protein GlmU (455 aa).

A pyrophosphorylase region spans residues 1-225; that stretch reads MEVVILAAGQ…IWETLGVNSK (225 aa). Residues 6–9, Lys20, Gln71, 76–77, 98–100, Gly135, Glu150, Asn165, and Asn223 each bind UDP-N-acetyl-alpha-D-glucosamine; these read LAAG, GT, and YGD. Asp100 provides a ligand contact to Mg(2+). Asn223 provides a ligand contact to Mg(2+). Residues 226 to 246 form a linker region; the sequence is AQLAELERLHQRNIATRLMED. The N-acetyltransferase stretch occupies residues 247-455; the sequence is GVTLFDPSRI…KRPVKKKAGE (209 aa). UDP-N-acetyl-alpha-D-glucosamine contacts are provided by Arg329 and Lys347. His359 acts as the Proton acceptor in catalysis. Residues Tyr362 and Asn373 each coordinate UDP-N-acetyl-alpha-D-glucosamine. Acetyl-CoA contacts are provided by residues Ala376, 382–383, Ser401, Ala419, and Arg436; that span reads NY.

This sequence in the N-terminal section; belongs to the N-acetylglucosamine-1-phosphate uridyltransferase family. The protein in the C-terminal section; belongs to the transferase hexapeptide repeat family. Homotrimer. Mg(2+) serves as cofactor.

The protein localises to the cytoplasm. The catalysed reaction is alpha-D-glucosamine 1-phosphate + acetyl-CoA = N-acetyl-alpha-D-glucosamine 1-phosphate + CoA + H(+). The enzyme catalyses N-acetyl-alpha-D-glucosamine 1-phosphate + UTP + H(+) = UDP-N-acetyl-alpha-D-glucosamine + diphosphate. It functions in the pathway nucleotide-sugar biosynthesis; UDP-N-acetyl-alpha-D-glucosamine biosynthesis; N-acetyl-alpha-D-glucosamine 1-phosphate from alpha-D-glucosamine 6-phosphate (route II): step 2/2. It participates in nucleotide-sugar biosynthesis; UDP-N-acetyl-alpha-D-glucosamine biosynthesis; UDP-N-acetyl-alpha-D-glucosamine from N-acetyl-alpha-D-glucosamine 1-phosphate: step 1/1. Its pathway is bacterial outer membrane biogenesis; LPS lipid A biosynthesis. Functionally, catalyzes the last two sequential reactions in the de novo biosynthetic pathway for UDP-N-acetylglucosamine (UDP-GlcNAc). The C-terminal domain catalyzes the transfer of acetyl group from acetyl coenzyme A to glucosamine-1-phosphate (GlcN-1-P) to produce N-acetylglucosamine-1-phosphate (GlcNAc-1-P), which is converted into UDP-GlcNAc by the transfer of uridine 5-monophosphate (from uridine 5-triphosphate), a reaction catalyzed by the N-terminal domain. This Aromatoleum aromaticum (strain DSM 19018 / LMG 30748 / EbN1) (Azoarcus sp. (strain EbN1)) protein is Bifunctional protein GlmU.